Reading from the N-terminus, the 510-residue chain is 2,3-bisphosphoglycerate-independent phosphoglycerate mutase (510 aa).

Residue aspartate 12 coordinates Mn(2+). Tyrosine 36 is modified (phosphotyrosine). Serine 62 is a Mn(2+) binding site. Serine 62 (phosphoserine intermediate) is an active-site residue. Substrate is bound by residues histidine 123, 153-154 (RD), arginine 185, arginine 191, 261-264 (RPDR), and lysine 336. Residues aspartate 403, histidine 407, aspartate 444, histidine 445, and histidine 462 each coordinate Mn(2+).

The protein belongs to the BPG-independent phosphoglycerate mutase family. Monomer. Requires Mn(2+) as cofactor.

It carries out the reaction (2R)-2-phosphoglycerate = (2R)-3-phosphoglycerate. The protein operates within carbohydrate degradation; glycolysis; pyruvate from D-glyceraldehyde 3-phosphate: step 3/5. Functionally, essential for rapid growth and for sporulation. Catalyzes the interconversion of 2-phosphoglycerate and 3-phosphoglycerate. The chain is 2,3-bisphosphoglycerate-independent phosphoglycerate mutase from Halalkalibacterium halodurans (strain ATCC BAA-125 / DSM 18197 / FERM 7344 / JCM 9153 / C-125) (Bacillus halodurans).